Here is a 427-residue protein sequence, read N- to C-terminus: Glutamate-1-semialdehyde 2,1-aminomutase (427 aa).

The residue at position 265 (Lys265) is an N6-(pyridoxal phosphate)lysine.

Belongs to the class-III pyridoxal-phosphate-dependent aminotransferase family. HemL subfamily. Homodimer. The cofactor is pyridoxal 5'-phosphate.

Its subcellular location is the cytoplasm. The catalysed reaction is (S)-4-amino-5-oxopentanoate = 5-aminolevulinate. Its pathway is porphyrin-containing compound metabolism; protoporphyrin-IX biosynthesis; 5-aminolevulinate from L-glutamyl-tRNA(Glu): step 2/2. The polypeptide is Glutamate-1-semialdehyde 2,1-aminomutase (Burkholderia pseudomallei (strain 668)).